Consider the following 434-residue polypeptide: Trigger factor (434 aa).

Positions 160-245 (GDKVKMNFVG…LTEVQAANLP (86 aa)) constitute a PPIase FKBP-type domain.

The protein belongs to the FKBP-type PPIase family. Tig subfamily.

The protein localises to the cytoplasm. The catalysed reaction is [protein]-peptidylproline (omega=180) = [protein]-peptidylproline (omega=0). In terms of biological role, involved in protein export. Acts as a chaperone by maintaining the newly synthesized protein in an open conformation. Functions as a peptidyl-prolyl cis-trans isomerase. This chain is Trigger factor, found in Shewanella baltica (strain OS185).